Here is a 288-residue protein sequence, read N- to C-terminus: Solute carrier family 25 member 45 (288 aa).

Solcar repeat units lie at residues 1–83 (MPVE…TLLA), 97–191 (PSYT…LCRQ), and 199–286 (PSSA…LLRL). 6 helical membrane passes run 6–26 (FVAG…FDTV), 58–78 (GMSF…GVYS), 102–122 (IFIA…PFDL), 166–186 (GSWA…VTYE), 202–222 (ATVL…ATPF), and 266–286 (SARA…LLRL).

It belongs to the mitochondrial carrier (TC 2.A.29) family. In terms of tissue distribution, widely expressed, with highest levels in testis, liver and kidney and low levels in brain, including cortex, cerebellum, hippocampus and hypothalamus, and heart.

The protein resides in the mitochondrion inner membrane. The protein is Solute carrier family 25 member 45 (Slc25a45) of Mus musculus (Mouse).